Here is a 340-residue protein sequence, read N- to C-terminus: Glycerol-3-phosphate dehydrogenase [NAD(P)+] (340 aa).

Residues S23, W24, R43, K44, and K113 each contribute to the NADPH site. Sn-glycerol 3-phosphate-binding residues include K113, G141, and T143. A145 is an NADPH binding site. K196, D249, S259, R260, and N261 together coordinate sn-glycerol 3-phosphate. Catalysis depends on K196, which acts as the Proton acceptor. R260 contributes to the NADPH binding site. NADPH is bound at residue E286.

This sequence belongs to the NAD-dependent glycerol-3-phosphate dehydrogenase family.

It is found in the cytoplasm. It catalyses the reaction sn-glycerol 3-phosphate + NAD(+) = dihydroxyacetone phosphate + NADH + H(+). The catalysed reaction is sn-glycerol 3-phosphate + NADP(+) = dihydroxyacetone phosphate + NADPH + H(+). The protein operates within membrane lipid metabolism; glycerophospholipid metabolism. Functionally, catalyzes the reduction of the glycolytic intermediate dihydroxyacetone phosphate (DHAP) to sn-glycerol 3-phosphate (G3P), the key precursor for phospholipid synthesis. This chain is Glycerol-3-phosphate dehydrogenase [NAD(P)+], found in Zymomonas mobilis subsp. mobilis (strain ATCC 31821 / ZM4 / CP4).